The following is a 75-amino-acid chain: Small ribosomal subunit protein bS18 (75 aa).

Belongs to the bacterial ribosomal protein bS18 family. As to quaternary structure, part of the 30S ribosomal subunit. Forms a tight heterodimer with protein bS6.

Functionally, binds as a heterodimer with protein bS6 to the central domain of the 16S rRNA, where it helps stabilize the platform of the 30S subunit. This is Small ribosomal subunit protein bS18 from Thermosipho melanesiensis (strain DSM 12029 / CIP 104789 / BI429).